Here is a 31-residue protein sequence, read N- to C-terminus: Mu-conotoxin SmIIIA (31 aa).

The propeptide occupies 1–6 (PLFDKR). The residue at position 7 (Q7) is a Pyrrolidone carboxylic acid. Cystine bridges form between C9/C21, C10/C27, and C16/C28. The residue at position 28 (C28) is a Cysteine amide.

This sequence belongs to the conotoxin M superfamily. Post-translationally, smIIIA' is a putative isoform where the N-terminal AA is missing. As to expression, expressed by the venom duct.

Its subcellular location is the secreted. In terms of biological role, mu-conotoxins block voltage-gated sodium channels (Nav). This toxin blocks rNav1.5/SCN5A (IC(50) is 1.3 uM), rNav1.6/SCN8A (IC(50) is 160 nM), rNav1.7/SCN9A (IC(50) is 1.3 uM), rNav1.1/SCN1A (K(d) is 3.8 nM), rNav1.2/SCN2A (K(d) is 1.3 nM), rNav1.4/SCN4A (K(d) is 0.22 nM), rNav1.6/SCN8A (K(d) is 69 nM), and rNav1.7/SCN9A (K(d) is 260 nM). This toxin is very potent but weakly discriminating among sodium channels. The block of these channels is modified when beta-subunits are coexpressed with alpha subunits. Hence, blocks of channels containing beta-1 and beta-3 subunits are more potent (compared to channels without beta subunits), whereas blocks of channels containing beta-2 and beta-4 subunits are less potent (compared to channels without beta subunits). This Conus stercusmuscarum (Fly-specked cone) protein is Mu-conotoxin SmIIIA.